The chain runs to 757 residues: Chloride anion exchanger (757 aa).

At 1–71 the chain is on the cytoplasmic side; it reads MIEAIGNQYV…SWLPAYKIKE (71 aa). Residues 72 to 92 traverse the membrane as a helical segment; it reads WLLSDIVSGISTGLVAVLQGL. Residue Ala93 is a topological domain, extracellular. The helical transmembrane segment at 94-114 threads the bilayer; sequence FALLVNIPPAYGLYAAFFPVI. Over 115 to 124 the chain is Cytoplasmic; that stretch reads TYFFLGTSRH. A helical transmembrane segment spans residues 125 to 145; sequence ISVGPFPVLSMMVGVVVTRVV. Over 146–176 the chain is Extracellular; the sequence is SDPNASSELSSSSTENDSFIEEKVMVAASVT. 2 N-linked (GlcNAc...) asparagine glycosylation sites follow: Asn149 and Asn161. The chain crosses the membrane as a helical span at residues 177-197; it reads VLSGIIQLLLGVLQVGFVVIY. Residues 198-201 are Cytoplasmic-facing; it reads LSES. A helical membrane pass occupies residues 202 to 222; that stretch reads LISGFTTAAAIHVLVSQLKFM. Residues 223-250 lie on the Extracellular side of the membrane; the sequence is LQLPVPAYSDPFSIFKVLESVFTQIQKT. The chain crosses the membrane as a helical span at residues 251–271; that stretch reads NIADLVTSVIILVVVFVFKEI. Residues 272-278 are Cytoplasmic-facing; that stretch reads NQRYRSK. Residues 279-299 form a helical membrane-spanning segment; the sequence is LPVPIPIELIMTVIATGVSYG. At 300-335 the chain is on the extracellular side; that stretch reads CNFEDRFGVAVVGNMSLGFQPPITPSVEVFQDTIGD. The chain crosses the membrane as a helical span at residues 336–356; sequence SFGIAIVGFAVAFSVASVYSL. At 357–367 the chain is on the cytoplasmic side; sequence KYDYPIDGNQE. Residues 368–388 form a helical membrane-spanning segment; that stretch reads LIALGVSNIFTGAFKGFAGST. Residues 389–404 lie on the Extracellular side of the membrane; the sequence is ALSRSGVQESTGGKTQ. The chain crosses the membrane as a helical span at residues 405–425; that stretch reads VAGLLSAVIVLIVIVAIGFLL. The Cytoplasmic portion of the chain corresponds to 426 to 462; the sequence is QPLQKSVLAALALGNLKGMLMQFAEIGRLWKKDKYDC. A helical transmembrane segment spans residues 463–483; that stretch reads LIWIMTFIFAIVLGLGLGLAA. Topologically, residues 484–757 are extracellular; that stretch reads SVAFQLLTIV…ECQVPVETKF (274 aa). One can recognise an STAS domain in the interval 518-713; it reads NYAEVYEPEG…LTIHDAILHI (196 aa). A PDZ-binding motif is present at residues 754–757; it reads ETKF.

Belongs to the SLC26A/SulP transporter (TC 2.A.53) family. Interacts with PDZK1. Interacts with CFTR, SLC26A6 and NHERF1. Interacts (via PDZ-binding motif) with NHERF4 (via the third PDZ domain). This interaction leads to decreased expression of SLC26A3 on the cell membrane resulting in its reduced exchanger activity. N-glycosylation is required for efficient cell surface expression, and protection from proteolytic degradation. As to expression, expressed in spermatogenic cells. Expressed at high levels in cecum and colon and at lower levels in small intestine.

The protein resides in the apical cell membrane. The protein localises to the membrane. Its subcellular location is the cell membrane. The catalysed reaction is hydrogencarbonate(in) + 2 chloride(out) = hydrogencarbonate(out) + 2 chloride(in). Its function is as follows. Mediates chloride-bicarbonate exchange with a chloride bicarbonate stoichiometry of 2:1 in the intestinal epithelia. Plays a role in the chloride and bicarbonate homeostasis during sperm epididymal maturation and capacitation. The polypeptide is Chloride anion exchanger (Slc26a3) (Mus musculus (Mouse)).